A 515-amino-acid chain; its full sequence is Protein nucleotidyltransferase YdiU (515 aa).

Gly-101, Gly-103, Arg-104, Lys-124, Asp-136, Gly-137, Arg-194, and Arg-201 together coordinate ATP. Asp-269 serves as the catalytic Proton acceptor. Asn-270 and Asp-279 together coordinate Mg(2+). An ATP-binding site is contributed by Asp-279.

The protein belongs to the SELO family. The cofactor is Mg(2+). Mn(2+) is required as a cofactor.

The catalysed reaction is L-seryl-[protein] + ATP = 3-O-(5'-adenylyl)-L-seryl-[protein] + diphosphate. It catalyses the reaction L-threonyl-[protein] + ATP = 3-O-(5'-adenylyl)-L-threonyl-[protein] + diphosphate. It carries out the reaction L-tyrosyl-[protein] + ATP = O-(5'-adenylyl)-L-tyrosyl-[protein] + diphosphate. The enzyme catalyses L-histidyl-[protein] + UTP = N(tele)-(5'-uridylyl)-L-histidyl-[protein] + diphosphate. The catalysed reaction is L-seryl-[protein] + UTP = O-(5'-uridylyl)-L-seryl-[protein] + diphosphate. It catalyses the reaction L-tyrosyl-[protein] + UTP = O-(5'-uridylyl)-L-tyrosyl-[protein] + diphosphate. In terms of biological role, nucleotidyltransferase involved in the post-translational modification of proteins. It can catalyze the addition of adenosine monophosphate (AMP) or uridine monophosphate (UMP) to a protein, resulting in modifications known as AMPylation and UMPylation. The protein is Protein nucleotidyltransferase YdiU of Cytophaga hutchinsonii (strain ATCC 33406 / DSM 1761 / CIP 103989 / NBRC 15051 / NCIMB 9469 / D465).